The sequence spans 279 residues: Large ribosomal subunit protein uL2 (279 aa).

The segment at 223–279 is disordered; it reads VAMNPIDHPHGGGEGRTSGGRHPVTPWGKGTKGTRTRSNKSTDKYILRSRHAKKKGR. Residues 269-279 are compositionally biased toward basic residues; it reads LRSRHAKKKGR.

This sequence belongs to the universal ribosomal protein uL2 family. As to quaternary structure, part of the 50S ribosomal subunit. Forms a bridge to the 30S subunit in the 70S ribosome.

One of the primary rRNA binding proteins. Required for association of the 30S and 50S subunits to form the 70S ribosome, for tRNA binding and peptide bond formation. It has been suggested to have peptidyltransferase activity; this is somewhat controversial. Makes several contacts with the 16S rRNA in the 70S ribosome. The chain is Large ribosomal subunit protein uL2 from Paracoccus denitrificans (strain Pd 1222).